The primary structure comprises 779 residues: Aconitate hydratase, mitochondrial (779 aa).

A mitochondrion-targeting transit peptide spans 1–28 (MIAMDRIARIPIARWTSRAFRVSAAARQ). Substrate is bound by residues Q97 and 190 to 192 (DSH). [4Fe-4S] cluster is bound by residues C383, C446, and C449. Residues R472, R477, R605, and 668 to 669 (SR) contribute to the substrate site.

Belongs to the aconitase/IPM isomerase family. As to quaternary structure, monomer. The cofactor is [4Fe-4S] cluster.

Its subcellular location is the mitochondrion. The enzyme catalyses citrate = D-threo-isocitrate. It participates in carbohydrate metabolism; tricarboxylic acid cycle; isocitrate from oxaloacetate: step 2/2. Catalyzes the isomerization of citrate to isocitrate via cis-aconitate. The chain is Aconitate hydratase, mitochondrial from Gracilaria gracilis (Red alga).